The chain runs to 421 residues: Prenyltransferase asqH2 (421 aa).

The tract at residues 1–28 (MDRNSFTAYGPATGAITESGEQENDHTK) is disordered. Residue Glu-105 coordinates L-tryptophan. Substrate is bound by residues Arg-119, Arg-272, Lys-274, Tyr-276, and Tyr-341.

The protein belongs to the tryptophan dimethylallyltransferase family.

It carries out the reaction yaequinolone E + dimethylallyl diphosphate + H2O = [(1'E)-3'-hydroxy-3',7'-dimethylocta-1',6'-dien-1'-yl]-quinolinone B + diphosphate. It participates in secondary metabolite biosynthesis. The protein operates within alkaloid biosynthesis. It functions in the pathway mycotoxin biosynthesis. Functionally, prenyltransferase; part of the gene cluster that mediates the biosynthesis of the aspoquinolone mycotoxins. Within the pathway, the prenyltransferase asqH2 performs the second alkylation with DMAPP at delta(3') double bond to yield a carbenium ion intermediate, which can be attacked by H(2)O to yield a styrenyl quinolone containing a C3'-hydroxyprenyl chain. The first step of the pathway is catalyzed by the nonribosomal peptide synthetase asqK that condenses anthranilic acid and O-methyl-L-tyrosine to produce 4'-methoxycyclopeptin. 4'-methoxycyclopeptin is then converted to 4'-methoxydehydrocyclopeptin by the ketoglutarate-dependent dioxygenase asqJ. AsqJ also converts its first product 4'-methoxydehydrocyclopeptin to 4'-methoxycyclopenin. The following conversion of 4'-methoxycyclopenin into 4'-methoxyviridicatin is catalyzed by the cyclopenase asqI. 4'-methoxyviridicatin is the precursor of quinolone natural products, and is further converted to quinolinone B. The prenyltransferase asqH1 then catalyzes the canonical Friedel-Crafts alkylation of quinolinone B with dimethylallyl cation to yield dimethylallyl quinolone, which is subjected to FAD-dependent dehydrogenation by the FAD-linked oxidoreductase asqF to yield conjugated aryl diene. The delta(3') double bond then serves as the site of the second alkylation with DMAPP catalyzed by the prenyltransferase asqH2 to yield a carbenium ion intermediate, which can be attacked by H(2)O to yield a styrenyl quinolone containing a C3'-hydroxyprenyl chain. The FAD-dependent monooxygenase asqG performs epoxidation of the terminal C7'-C8' olefin. Finally, after dehydratation of the epoxide at C3 by asqC, the quinolone epoxide rearrangement protein asqO catalyzes an enzymatic 3-exo-tet cyclization to yield the cyclopropyl-THF ring system in aspoquinolone. The protein is Prenyltransferase asqH2 of Emericella nidulans (strain FGSC A4 / ATCC 38163 / CBS 112.46 / NRRL 194 / M139) (Aspergillus nidulans).